A 552-amino-acid polypeptide reads, in one-letter code: MFQGLSPLARDARAWPFEQARVLLARILRLRLSDAERDLASVLIHSGKADEAVRTFPALAKPVILETGYGPSGLPHLGTFGEVARTTMVRNAFRALTDDAIKTRLIAFSDDMDGLRKVPDNIENKQPLIEDLGKPLTVVRDPFGTHDSFGAHNNARLRAFLDGFGFEYEFVSSTDCYKGGLFDETLLTALARFDAIQKVMLPTLGEERRASYSPFLPISPSTGKVLQVPTLERDVDKGTIVFQDEDGSKVEVPVTGGHVKMQWKPDWAMRWTALGVDYEMSGKDLIDSVKASGQICKALGGVPPEGFNYELFLDENSQKISKSKGNGLSMEDWLRYGAPESLSYYMFQSPKSAKKLYFDVIPKATDEYLQQLDAYPKQEPAKQLDNPVWHVHSGRPPQYGSPVSFSLMLNLVSAANASDKEILWGFLSRYIPGATPQSQPLLDRLAGYAINYYEDFVKPSKVFRAPDDKERAAMLDLLGRLKALPSDCQDAELIQNEVFAVGKDHGFDPLRAWFQALYEVLLGQSQGPRFGSFAAIFGLDRTTALIAEKLAV.

The 'HIGH' region motif lies at 71–79; sequence PSGLPHLGT. The 'KMSKS' region signature appears at 319-323; sequence KISKS. An ATP-binding site is contributed by lysine 322.

It belongs to the class-I aminoacyl-tRNA synthetase family.

The protein resides in the cytoplasm. It carries out the reaction tRNA(Lys) + L-lysine + ATP = L-lysyl-tRNA(Lys) + AMP + diphosphate. This Caulobacter sp. (strain K31) protein is Lysine--tRNA ligase.